The sequence spans 1320 residues: Sister chromatid cohesion protein PDS5 homolog A (1320 aa).

HEAT repeat units follow at residues 156 to 195 (NEIF…EGDG), 272 to 310 (PLLL…AKDS), 388 to 426 (NLVN…KYCL), 709 to 747 (PQIR…NKEV), and 990 to 1028 (SLLP…CLWF). The span at 1158–1179 (TFTSETGSNASTNSQPSSPATN) shows a compositional bias: polar residues. The disordered stretch occupies residues 1158–1320 (TFTSETGSNA…APQRQIDLQR (163 aa)). Over residues 1180 to 1194 (KSRDVSSEVGARENE) the composition is skewed to basic and acidic residues. Over residues 1225–1241 (GTENSVSSNPSAGSQPP) the composition is skewed to polar residues. The segment covering 1255–1267 (AGAATQEKEAGAT) has biased composition (low complexity). The span at 1283 to 1293 (QDPSSTASTDA) shows a compositional bias: polar residues. A compositionally biased stretch (basic and acidic residues) spans 1294 to 1309 (LSDKTPKQQKEAEPKR).

The protein belongs to the PDS5 family. As to quaternary structure, interacts with the cohesin complex. Binds chromatin in a cohesin-dependent manner.

It is found in the nucleus. In terms of biological role, may regulate sister chromatid cohesion during mitosis and couple it to DNA replication. This is Sister chromatid cohesion protein PDS5 homolog A from Danio rerio (Zebrafish).